Consider the following 68-residue polypeptide: Negative regulatory protein YxlD (68 aa).

2 consecutive transmembrane segments (helical) span residues 5 to 25 (EIII…FLFI) and 37 to 57 (WGIV…FFVI).

The protein localises to the cell membrane. Its function is as follows. Together with YxlE, is important for negative regulation of sigma Y activity, being the major negative regulator. This Bacillus subtilis (strain 168) protein is Negative regulatory protein YxlD (yxlD).